A 361-amino-acid polypeptide reads, in one-letter code: Probable purine permease 13 (361 aa).

Helical transmembrane passes span tryptophan 35–leucine 55, tryptophan 68–leucine 88, leucine 103–phenylalanine 123, serine 129–isoleucine 151, isoleucine 156–leucine 176, leucine 192–methionine 212, valine 238–valine 258, valine 268–alanine 288, valine 289–isoleucine 309, and leucine 323–tyrosine 343.

The protein belongs to the purine permeases (TC 2.A.7.14) family.

Its subcellular location is the membrane. This Arabidopsis thaliana (Mouse-ear cress) protein is Probable purine permease 13 (PUP13).